Reading from the N-terminus, the 490-residue chain is Pleckstrin homology domain-containing family O member 2 (490 aa).

The PH domain maps to 18–119 (MVDKAGWIKK…WIKALNEGIN (102 aa)). Residues Ser-164 and Ser-167 each carry the phosphoserine modification. A disordered region spans residues 173–402 (LDLDVPDSGP…DLLGEGPRHP (230 aa)). Residues 230 to 243 (APTPVSASSEVSPE) are compositionally biased toward low complexity. Thr-232 is modified (phosphothreonine). Phosphoserine is present on residues Ser-235, Ser-237, and Ser-238. Over residues 244 to 257 (SQEDSETPAEEDSG) the composition is skewed to acidic residues. Ser-273 carries the phosphoserine modification. Residues 277 to 297 (PSPQEAPAAESAEPSQAPCSE) show a composition bias toward low complexity. Phosphothreonine occurs at positions 298 and 311. Phosphoserine occurs at positions 390 and 468. Residues 439–481 (SAETLLSQAVEQLRQATQVLQEMRDLGELSQEAPGLREKRKEL) adopt a coiled-coil conformation.

The protein is Pleckstrin homology domain-containing family O member 2 (PLEKHO2) of Homo sapiens (Human).